Consider the following 172-residue polypeptide: MDFKQHIKEVADYPKEGISFKDITSLMQNGEVYKKSVDELVAYARERGAELIAGPEARGFVVGCPAAYALELGFVPVRKEGKLPRETVRVSYGLEYGTDILTMHKDSIQPGQQVVILDDLLATGGTIEATIKMIEQLGGVVAGIGFLIELDGLGGRERLEGYDVFSLIRYED.

The protein belongs to the purine/pyrimidine phosphoribosyltransferase family. Homodimer.

The protein resides in the cytoplasm. It carries out the reaction AMP + diphosphate = 5-phospho-alpha-D-ribose 1-diphosphate + adenine. It participates in purine metabolism; AMP biosynthesis via salvage pathway; AMP from adenine: step 1/1. Its function is as follows. Catalyzes a salvage reaction resulting in the formation of AMP, that is energically less costly than de novo synthesis. This is Adenine phosphoribosyltransferase from Exiguobacterium sp. (strain ATCC BAA-1283 / AT1b).